A 426-amino-acid chain; its full sequence is Phytoene synthase 3, chloroplastic (426 aa).

The transit peptide at Met1–Ala52 directs the protein to the chloroplast.

This sequence belongs to the phytoene/squalene synthase family. As to expression, expressed in roots and endosperm.

Its subcellular location is the plastid. It localises to the chloroplast. It is found in the plastoglobule. It catalyses the reaction 2 (2E,6E,10E)-geranylgeranyl diphosphate = 15-cis-phytoene + 2 diphosphate. In terms of biological role, catalyzes the conversion of geranylgeranyl diphosphate to phytoene. Mediates the first committed step in carotenoid biosynthesis. May play a role in regulating carotenoid flux in response to abiotic stress in roots. May control flux to carotenoid precursors that are required for abiotic stress-induced abscisic acid (ABA) formation in roots. This is Phytoene synthase 3, chloroplastic from Zea mays (Maize).